The chain runs to 81 residues: uncharacterized protein (81 aa).

The disordered stretch occupies residues 1-58 (MPQSKQQFKRQGARQRDSKGKFVKARTGMATAPPAAVSTAAPTASTMTPTGSSTTATI). Positions 30–58 (ATAPPAAVSTAAPTASTMTPTGSSTTATI) are enriched in low complexity.

This is an uncharacterized protein from Caenorhabditis elegans.